The following is a 322-amino-acid chain: Exosome complex component RRP4 homolog (322 aa).

The 79-residue stretch at 94–172 (GDIVVGRVIE…HDGSLQLQAR (79 aa)) folds into the S1 motif domain. A KH domain is found at 182-237 (GQLLKVDPYLVKRSKHHFHYVESLGIDLIIGCNGFIWVGEHVEVRDPMAIDDQKDE).

The protein belongs to the RRP4 family. In terms of assembly, component of the RNA exosome complex. Interacts with RPP41. As to expression, expressed in roots, stems, rosette and cauline leaves, flowers and siliques.

The protein localises to the cytoplasm. Its subcellular location is the nucleus. The protein resides in the nucleolus. Functionally, non-catalytic component of the RNA exosome complex which has 3'-&gt;5' exoribonuclease activity and participates in a multitude of cellular RNA processing, maturation and degradation events. In vitro, is an active and distributive 3'-&gt;5' exonuclease requiring a free 3'-OH on the substrate and releasing nucleoside 5'-monophosphates. Required for normal embryo development. The sequence is that of Exosome complex component RRP4 homolog from Arabidopsis thaliana (Mouse-ear cress).